The primary structure comprises 267 residues: Multivesicular body subunit 12A (267 aa).

Residues 7-146 (AAPLSGVGWA…SFAIWCKKGA (140 aa)) form the MABP domain. Residues 154–159 (PVPKPR) carry the SH3-binding motif. Positions 210–259 (MDGVPFTLHPKFERSPKSDSSAILTDLTVKSLADIEKEYNYTFVVERTAA) constitute a UMA domain.

The protein belongs to the MVB12 family. In terms of assembly, component of the ESCRT-I complex (endosomal sorting complex required for transport I).

It is found in the cytoplasm. The protein localises to the endosome. It localises to the late endosome membrane. In terms of biological role, component of the ESCRT-I complex, a regulator of vesicular trafficking process. Required for the sorting of endocytic ubiquitinated cargos into multivesicular bodies. In Gallus gallus (Chicken), this protein is Multivesicular body subunit 12A (MVB12A).